A 451-amino-acid chain; its full sequence is Probable phosphoglucosamine mutase (451 aa).

Residue Ser96 is the Phosphoserine intermediate of the active site. Positions 96, 233, 235, and 237 each coordinate Mg(2+). The residue at position 96 (Ser96) is a Phosphoserine.

It belongs to the phosphohexose mutase family. Mg(2+) serves as cofactor. Post-translationally, activated by phosphorylation.

It catalyses the reaction alpha-D-glucosamine 1-phosphate = D-glucosamine 6-phosphate. Its function is as follows. Catalyzes the conversion of glucosamine-6-phosphate to glucosamine-1-phosphate. This Pyrococcus horikoshii (strain ATCC 700860 / DSM 12428 / JCM 9974 / NBRC 100139 / OT-3) protein is Probable phosphoglucosamine mutase.